A 342-amino-acid polypeptide reads, in one-letter code: Heat-inducible transcription repressor HrcA (342 aa).

Belongs to the HrcA family.

Functionally, negative regulator of class I heat shock genes (grpE-dnaK-dnaJ and groELS operons). Prevents heat-shock induction of these operons. This chain is Heat-inducible transcription repressor HrcA, found in Onion yellows phytoplasma (strain OY-M).